A 628-amino-acid chain; its full sequence is DNA mismatch repair protein MutL (628 aa).

Residues 335–411 are disordered; that stretch reads SVDIEPESEQ…ASRNSEVSLP (77 aa). The segment covering 343 to 353 has biased composition (polar residues); sequence EQTTAWQTSPT.

The protein belongs to the DNA mismatch repair MutL/HexB family.

Functionally, this protein is involved in the repair of mismatches in DNA. It is required for dam-dependent methyl-directed DNA mismatch repair. May act as a 'molecular matchmaker', a protein that promotes the formation of a stable complex between two or more DNA-binding proteins in an ATP-dependent manner without itself being part of a final effector complex. This Shewanella pealeana (strain ATCC 700345 / ANG-SQ1) protein is DNA mismatch repair protein MutL.